The following is a 357-amino-acid chain: UDP-N-acetylglucosamine--N-acetylmuramyl-(pentapeptide) pyrophosphoryl-undecaprenol N-acetylglucosamine transferase (357 aa).

UDP-N-acetyl-alpha-D-glucosamine contacts are provided by residues 13–15, Asn-125, Arg-161, Ser-189, Ile-243, and Gln-288; that span reads TGG.

Belongs to the glycosyltransferase 28 family. MurG subfamily.

It is found in the cell inner membrane. It catalyses the reaction di-trans,octa-cis-undecaprenyl diphospho-N-acetyl-alpha-D-muramoyl-L-alanyl-D-glutamyl-meso-2,6-diaminopimeloyl-D-alanyl-D-alanine + UDP-N-acetyl-alpha-D-glucosamine = di-trans,octa-cis-undecaprenyl diphospho-[N-acetyl-alpha-D-glucosaminyl-(1-&gt;4)]-N-acetyl-alpha-D-muramoyl-L-alanyl-D-glutamyl-meso-2,6-diaminopimeloyl-D-alanyl-D-alanine + UDP + H(+). Its pathway is cell wall biogenesis; peptidoglycan biosynthesis. Its function is as follows. Cell wall formation. Catalyzes the transfer of a GlcNAc subunit on undecaprenyl-pyrophosphoryl-MurNAc-pentapeptide (lipid intermediate I) to form undecaprenyl-pyrophosphoryl-MurNAc-(pentapeptide)GlcNAc (lipid intermediate II). The polypeptide is UDP-N-acetylglucosamine--N-acetylmuramyl-(pentapeptide) pyrophosphoryl-undecaprenol N-acetylglucosamine transferase (Polynucleobacter asymbioticus (strain DSM 18221 / CIP 109841 / QLW-P1DMWA-1) (Polynucleobacter necessarius subsp. asymbioticus)).